Consider the following 59-residue polypeptide: MAVPKRKTSPSKRGMRRSHDSLKVEAFQECPNCGELKRPHNLCNACGHYNGREVVSVGA.

A compositionally biased stretch (basic residues) spans 1–16 (MAVPKRKTSPSKRGMR). Positions 1–20 (MAVPKRKTSPSKRGMRRSHD) are disordered.

This sequence belongs to the bacterial ribosomal protein bL32 family.

In Sphingopyxis alaskensis (strain DSM 13593 / LMG 18877 / RB2256) (Sphingomonas alaskensis), this protein is Large ribosomal subunit protein bL32.